We begin with the raw amino-acid sequence, 771 residues long: Leucine-rich repeat and fibronectin type III domain-containing protein 1 (771 aa).

An N-terminal signal peptide occupies residues 1–31 (MAPGPFSSALLSPPPAALPFLLLLWAGASRG). The LRRNT domain occupies 32–65 (QPCPGRCICQNVAPTLTMLCAKTGLLFVPPAIDR). Residues 32–536 (QPCPGRCICQ…LRAHFLGGTM (505 aa)) are Extracellular-facing. LRR repeat units follow at residues 66–87 (RVVE…DFAN), 90–111 (SLVH…AFAD), 114–135 (ALRA…QLRG), 138–159 (NLRH…AFDA), 163–184 (TVED…AVGQ), 187–208 (NLNT…TFVQ), and 211–232 (KLVR…GLFL). Asparagine 87 is a glycosylation site (N-linked (GlcNAc...) asparagine). An LRRCT domain is found at 252–298 (NPLHCNCELLWLRRLTREDDLETCATPEHLTDRYFWSIPEEEFLCEP). Residues 299 to 386 (PLITRQAGGR…GEATAPVEVC (88 aa)) enclose the Ig-like domain. Residues cysteine 321 and cysteine 370 are joined by a disulfide bond. N-linked (GlcNAc...) asparagine glycosylation is present at asparagine 343. The interval 397 to 422 (PAAPPPLTEPGSSDIATPGRPGANDS) is disordered. Residues 424–520 (AERRLVAAEL…GCVQFTTAGD (97 aa)) enclose the Fibronectin type-III domain. A helical transmembrane segment spans residues 537 to 557 (IIAIGGVIVASVLVFIVLLMI). Residues 558 to 771 (RYKVYGDGDS…STEWMLESTV (214 aa)) are Cytoplasmic-facing. A phosphoserine mark is found at serine 613 and serine 718. The interval 654–743 (PSEETSGEES…HLDGAGGGAA (90 aa)) is disordered. The segment covering 719-732 (YPRRARRTKRHRST) has biased composition (basic residues). The short motif at 768 to 771 (ESTV) is the PDZ-binding element.

This sequence belongs to the LRFN family. In terms of assembly, can form heteromeric complexes with LRFN2, LRFN3, LRFN4 and LRFN5. Forms homomeric complexes, but not across cell junctions. Interacts with DLG1, DLG2, DLG3 and DLG4. Interacts with 2 AMPA receptor subunits GRIA1 and GRIA2 and NMDA receptor subunit GRIN1. In terms of processing, glycosylated.

It is found in the membrane. The protein localises to the synapse. The protein resides in the postsynaptic density membrane. Functionally, promotes neurite outgrowth in hippocampal neurons. Involved in the regulation and maintenance of excitatory synapses. Induces the clustering of excitatory postsynaptic proteins, including DLG4, DLGAP1, GRIA1 and GRIN1. The polypeptide is Leucine-rich repeat and fibronectin type III domain-containing protein 1 (LRFN1) (Homo sapiens (Human)).